We begin with the raw amino-acid sequence, 90 residues long: Molybdopterin synthase sulfur carrier subunit (90 aa).

Gly90 carries the 1-thioglycine; alternate modification. Gly90 bears the Glycyl adenylate; alternate mark.

It belongs to the MoaD family. MOCS2A subfamily. In terms of assembly, heterotetramer; composed of 2 small (Mocs2A) and 2 large (Mocs2B) subunits. In terms of processing, C-terminal thiocarboxylation occurs in 2 steps, it is first acyl-adenylated (-COAMP) via the hesA/moeB/thiF part of MOCS3, then thiocarboxylated (-COSH) via the rhodanese domain of MOCS3.

It localises to the cytoplasm. It participates in cofactor biosynthesis; molybdopterin biosynthesis. Acts as a sulfur carrier required for molybdopterin biosynthesis. Component of the molybdopterin synthase complex that catalyzes the conversion of precursor Z into molybdopterin by mediating the incorporation of 2 sulfur atoms into precursor Z to generate a dithiolene group. In the complex, serves as sulfur donor by being thiocarboxylated (-COSH) at its C-terminus by MOCS3. After interaction with Mocs2B, the sulfur is then transferred to precursor Z to form molybdopterin. In Drosophila ananassae (Fruit fly), this protein is Molybdopterin synthase sulfur carrier subunit.